The sequence spans 310 residues: tRNA pseudouridine synthase B (310 aa).

Aspartate 37 acts as the Nucleophile in catalysis.

Belongs to the pseudouridine synthase TruB family. Type 1 subfamily.

It catalyses the reaction uridine(55) in tRNA = pseudouridine(55) in tRNA. Its function is as follows. Responsible for synthesis of pseudouridine from uracil-55 in the psi GC loop of transfer RNAs. In Deinococcus deserti (strain DSM 17065 / CIP 109153 / LMG 22923 / VCD115), this protein is tRNA pseudouridine synthase B.